The sequence spans 606 residues: Endonuclease 8-like 3 (606 aa).

Valine 2 functions as the Schiff-base intermediate with DNA; via amino nitrogen in the catalytic mechanism. DNA is bound by residues asparagine 193 and arginine 272. An FPG-type zinc finger spans residues 248 to 282; the sequence is KVYKRPNCDQCHSKITVCRFGENSRMTYFCPHCQK. A RanBP2-type zinc finger spans residues 318 to 347; sequence SEEQWSCVVCTLINRPSAKACDACLTTRPL. Serine 451 carries the phosphoserine modification. The span at 479–494 shows a compositional bias: polar residues; it reads KSYNSGLSNSELQTNR. The tract at residues 479–506 is disordered; the sequence is KSYNSGLSNSELQTNRTRGHHSKSDGSP. Zn(2+) is bound by residues cysteine 508, histidine 511, cysteine 534, cysteine 542, cysteine 555, histidine 557, cysteine 580, and cysteine 588. 2 consecutive GRF-type zinc fingers follow at residues 508 to 551 and 555 to 597; these read CKMH…ADLS and CRHG…AENG.

This sequence belongs to the FPG family. As to expression, expressed in testis, thymus, spleen and bone marrow. In young mice, expressed at higher levels in thymocytes than splenocytes. At 12 dpc, abundant in the subventricular zone (SVZ) of the lateral ventricles. At 17.5 dpc and P0, expression is limited to distinct cells in the cortical SVZ, in cells of the secondary matrix, the dentate gyrus migratory route and the dentate gyrus.

It localises to the nucleus. The protein resides in the chromosome. It catalyses the reaction 2'-deoxyribonucleotide-(2'-deoxyribose 5'-phosphate)-2'-deoxyribonucleotide-DNA = a 3'-end 2'-deoxyribonucleotide-(2,3-dehydro-2,3-deoxyribose 5'-phosphate)-DNA + a 5'-end 5'-phospho-2'-deoxyribonucleoside-DNA + H(+). In terms of biological role, DNA glycosylase which prefers single-stranded DNA (ssDNA), or partially ssDNA structures such as bubble and fork structures, to double-stranded DNA (dsDNA). Mediates interstrand cross-link repair in response to replication stress: acts by mediating DNA glycosylase activity, cleaving one of the two N-glycosyl bonds comprising the interstrand cross-link, which avoids the formation of a double-strand break but generates an abasic site that is bypassed by translesion synthesis polymerases. In vitro, displays strong glycosylase activity towards the hydantoin lesions spiroiminodihydantoin (Sp) and guanidinohydantoin (Gh) in both ssDNA and dsDNA; also recognizes FapyA, FapyG, 5-OHU, 5-OHC, 5-OHMH, Tg and 8-oxoA lesions in ssDNA. No activity on 8-oxoG detected. Also shows weak DNA-(apurinic or apyrimidinic site) lyase activity. In vivo, appears to be the primary enzyme involved in removing Sp and Gh from ssDNA in neonatal tissues. In Mus musculus (Mouse), this protein is Endonuclease 8-like 3 (Neil3).